A 118-amino-acid chain; its full sequence is Ribonuclease P protein component (118 aa).

This sequence belongs to the RnpA family. As to quaternary structure, consists of a catalytic RNA component (M1 or rnpB) and a protein subunit.

The enzyme catalyses Endonucleolytic cleavage of RNA, removing 5'-extranucleotides from tRNA precursor.. Functionally, RNaseP catalyzes the removal of the 5'-leader sequence from pre-tRNA to produce the mature 5'-terminus. It can also cleave other RNA substrates such as 4.5S RNA. The protein component plays an auxiliary but essential role in vivo by binding to the 5'-leader sequence and broadening the substrate specificity of the ribozyme. This chain is Ribonuclease P protein component, found in Shewanella putrefaciens (strain CN-32 / ATCC BAA-453).